Reading from the N-terminus, the 538-residue chain is Potassium channel subfamily K member 10 (538 aa).

Over 1–71 (MFFLYTDFFL…GLQTVMKWKT (71 aa)) the chain is Cytoplasmic. The helical transmembrane segment at 72–92 (VVAIFVVVVVYLVTGGLVFRA) threads the bilayer. Asn-144, Asn-147, and Asn-148 each carry an N-linked (GlcNAc...) asparagine glycan. An intramembrane region (pore-forming) is located at residues 154 to 180 (LGSAFFFAGTVITTIGYGNIAPSTEGG). 4 residues coordinate K(+): Thr-167, Ile-168, Gly-169, and Tyr-170. A selectivity filter 1 region spans residues 167–172 (TIGYGN). A helical transmembrane segment spans residues 182–202 (IFCILYAIFGIPLFGFLLAGI). The Cytoplasmic segment spans residues 203–233 (GDQLGTIFGKSIARVEKVFRKKQVSQTKIRV). A helical transmembrane segment spans residues 234–254 (ISTILFILAGCIVFVTIPAVI). Residues 263–294 (ALESIYFVVVTLTTVGFGDFVAGGNAGINYRE) constitute an intramembrane region (pore-forming). K(+) is bound by residues Thr-276, Val-277, Gly-278, and Phe-279. Positions 276–281 (TVGFGD) are selectivity filter 2. A helical membrane pass occupies residues 299–319 (LVWFWILVGLAYFAAVLSMIG). The Cytoplasmic segment spans residues 320 to 538 (DWLRVLSKKT…ENNSLLEDRN (219 aa)). Positions 412 to 421 (SQESINNRPN) are enriched in polar residues. 2 disordered regions span residues 412–443 (SQESINNRPNNLRLKGPEQLNKHGQGASEDNI) and 510–538 (QHAELENGMIPTDTKDREPENNSLLEDRN). Residues 522 to 538 (DTKDREPENNSLLEDRN) show a composition bias toward basic and acidic residues.

This sequence belongs to the two pore domain potassium channel (TC 1.A.1.8) family. In terms of assembly, homodimer; disulfide-linked. Forms heterodimers with other 2-pore domain K(+) channel subunits, such as KCNK2, KCNK4 and KCNK18. Abundantly expressed in pancreas and kidney and to a lower level in brain, testis, colon, and small intestine. In brain, mainly expressed in cerebellum, occipital lobe, putamen, and thalamus. No expression is detected in amygdala and spinal cord. In terms of tissue distribution, strongly expressed in kidney (primarily in the proximal tubule) and pancreas. As to expression, abundantly expressed in brain.

It localises to the cell membrane. It carries out the reaction K(+)(in) = K(+)(out). The catalysed reaction is Rb(+)(in) = Rb(+)(out). The enzyme catalyses Cs(+)(in) = Cs(+)(out). With respect to regulation, activated by various stimuli including acidic pH, anesthetics chloroform, halothane and isoflurane, mechanical stretch, lipids such as arachidonic, docosahexaenoic and linoleic polyunsaturated fatty acids and lysophosphatidylcholine and lysophosphatidylinositol lysophospholipids. Inhibited by norfluoxetine, the active metabolite of antidepressant fluoxetine (Prozac). Functionally, k(+) channel that conducts voltage-dependent outward rectifying currents upon membrane depolarization. Voltage sensing is coupled to K(+) electrochemical gradient in an 'ion flux gating' mode where outward but not inward ion flow opens the gate. Converts to voltage-independent 'leak' conductance mode upon stimulation by various stimuli including mechanical membrane stretch, acidic pH, heat and lipids. Homo- and heterodimerizes to form functional channels with distinct regulatory and gating properties. In trigeminal ganglia sensory neurons, the heterodimer of KCNK10/TREK-2 and KCNK18/TRESK inhibits neuronal firing and neurogenic inflammation by stabilizing the resting membrane potential at K(+) equilibrium potential as well as by regulating the threshold of action potentials and the spike frequency. Permeable to other monovalent ions such as Rb(+) and Cs(+). This is Potassium channel subfamily K member 10 from Homo sapiens (Human).